Reading from the N-terminus, the 30-residue chain is Trypsin inhibitor 6 (30 aa).

Intrachain disulfides connect Cys-4-Cys-21, Cys-11-Cys-23, and Cys-17-Cys-29.

This sequence belongs to the protease inhibitor I7 (squash-type serine protease inhibitor) family.

The protein localises to the secreted. Strongly inhibits trypsin, weakly inhibits chymotrypsin. The protein is Trypsin inhibitor 6 of Cyclanthera pedata (Achocha).